The primary structure comprises 248 residues: 3-deoxy-manno-octulosonate cytidylyltransferase (248 aa).

This sequence belongs to the KdsB family.

Its subcellular location is the cytoplasm. The enzyme catalyses 3-deoxy-alpha-D-manno-oct-2-ulosonate + CTP = CMP-3-deoxy-beta-D-manno-octulosonate + diphosphate. The protein operates within nucleotide-sugar biosynthesis; CMP-3-deoxy-D-manno-octulosonate biosynthesis; CMP-3-deoxy-D-manno-octulosonate from 3-deoxy-D-manno-octulosonate and CTP: step 1/1. It participates in bacterial outer membrane biogenesis; lipopolysaccharide biosynthesis. Its function is as follows. Activates KDO (a required 8-carbon sugar) for incorporation into bacterial lipopolysaccharide in Gram-negative bacteria. This chain is 3-deoxy-manno-octulosonate cytidylyltransferase, found in Christiangramia forsetii (strain DSM 17595 / CGMCC 1.15422 / KT0803) (Gramella forsetii).